The sequence spans 107 residues: Dispanin subfamily A member 2b (107 aa).

The Extracellular segment spans residues 1–31 (MEYRTDQVPMSPRSVQGAPGTLPIRDHLPWS). A helical membrane pass occupies residues 32-52 (IFNLFYMNVCCLGLTAMIFSV). S-palmitoyl cysteine attachment occurs at residues Cys-41 and Cys-42. Residues 53 to 77 (KSRDRKVVGDVEGARHYGSTARSLN) lie on the Cytoplasmic side of the membrane. A helical membrane pass occupies residues 78-98 (IAATVLGILLIIILIGLAATG). The Extracellular segment spans residues 99-107 (TIQALKYKG).

Belongs to the CD225/Dispanin family. In terms of tissue distribution, expressed various cell types in torpedo electric organ and muscle, especially fibroblasts, capillary endothelial cells, and axonal cuff cells.

It is found in the cell membrane. This chain is Dispanin subfamily A member 2b, found in Torpedo marmorata (Marbled electric ray).